The chain runs to 294 residues: 4-hydroxy-tetrahydrodipicolinate synthase (294 aa).

T48 provides a ligand contact to pyruvate. Y136 acts as the Proton donor/acceptor in catalysis. K164 serves as the catalytic Schiff-base intermediate with substrate. V206 contributes to the pyruvate binding site.

This sequence belongs to the DapA family. As to quaternary structure, homotetramer; dimer of dimers.

Its subcellular location is the cytoplasm. It carries out the reaction L-aspartate 4-semialdehyde + pyruvate = (2S,4S)-4-hydroxy-2,3,4,5-tetrahydrodipicolinate + H2O + H(+). The protein operates within amino-acid biosynthesis; L-lysine biosynthesis via DAP pathway; (S)-tetrahydrodipicolinate from L-aspartate: step 3/4. In terms of biological role, catalyzes the condensation of (S)-aspartate-beta-semialdehyde [(S)-ASA] and pyruvate to 4-hydroxy-tetrahydrodipicolinate (HTPA). This is 4-hydroxy-tetrahydrodipicolinate synthase from Desulforudis audaxviator (strain MP104C).